A 1256-amino-acid polypeptide reads, in one-letter code: Neuronal cell adhesion molecule (1256 aa).

The first 29 residues, 1–29 (MQLKIMPKKKHLSAGGVPLILFLCQMISA), serve as a signal peptide directing secretion. Over 30–1119 (LDVPLDLVQP…ASRQVDIATQ (1090 aa)) the chain is Extracellular. Ig-like C2-type domains lie at 40 to 128 (PTIT…AAVS) and 135 to 229 (PSRS…QPIS). Cystine bridges form between C62–C117 and C161–C212. N-linked (GlcNAc...) asparagine glycosylation occurs at N77. Residues N217, N239, N245, N270, N308, and N371 are each glycosylated (N-linked (GlcNAc...) asparagine). Ig-like C2-type domains follow at residues 261-350 (PPTF…ISVT), 355-442 (PYWI…AFVN), 448-535 (PRIL…VHLE), and 539-626 (PTRI…AVLR). Cysteines 286 and 334 form a disulfide. The cysteines at positions 376 and 426 are disulfide-linked. N-linked (GlcNAc...) asparagine glycans are attached at residues N427 and N501. 2 disulfide bridges follow: C470–C519 and C561–C610. N613, N710, N796, N852, N987, N1003, N1013, and N1067 each carry an N-linked (GlcNAc...) asparagine glycan. 4 consecutive Fibronectin type-III domains span residues 643–738 (PPFD…TKAA), 740–837 (PDQN…SGED), 842–944 (APGN…TPEG), and 948–1045 (APSS…VDEA). Residues 1120–1142 (GWFIGLMCAVALLILILLIVCFI) traverse the membrane as a helical segment. The Cytoplasmic segment spans residues 1143–1256 (RRNKGGKYPV…SPVNAMNSFV (114 aa)). Residues 1151–1171 (PVKEKEDAHADPEIQPMKEDD) show a composition bias toward basic and acidic residues. Positions 1151–1256 (PVKEKEDAHA…SPVNAMNSFV (106 aa)) are disordered. The residue at position 1173 (T1173) is a Phosphothreonine. Y1177 is modified (phosphotyrosine). A Phosphoserine modification is found at S1178. Basic and acidic residues predominate over residues 1193 to 1202 (PSDRTVKKED). 6 positions are modified to phosphoserine: S1203, S1206, S1223, S1242, S1243, and S1247. Positions 1240–1256 (NESSEAPSPVNAMNSFV) are enriched in polar residues.

Belongs to the immunoglobulin superfamily. L1/neurofascin/NgCAM family. In terms of assembly, constituent of a NFASC/NRCAM/ankyrin-G complex. Detected in a complex with CNTN1 and PTPRB. Interacts with GLDN/gliomedin and MYOC. Detected in sciatic nerve. Detected in brain, especially in the cerebellum Purkinje cell layer, inner granule cell layer and molecular layer (at protein level). Detected in neurons and Schwann cells.

The protein resides in the cell membrane. It is found in the cell projection. The protein localises to the axon. It localises to the secreted. Cell adhesion protein that is required for normal responses to cell-cell contacts in brain and in the peripheral nervous system. Plays a role in neurite outgrowth in response to contactin binding. Plays a role in mediating cell-cell contacts between Schwann cells and axons. Plays a role in the formation and maintenance of the nodes of Ranvier on myelinated axons. Nodes of Ranvier contain clustered sodium channels that are crucial for the saltatory propagation of action potentials along myelinated axons. During development, nodes of Ranvier are formed by the fusion of two heminodes. Required for normal clustering of sodium channels at heminodes; not required for the formation of mature nodes with normal sodium channel clusters. Required, together with GLDN, for maintaining NFASC and sodium channel clusters at mature nodes of Ranvier. The chain is Neuronal cell adhesion molecule (Nrcam) from Mus musculus (Mouse).